The chain runs to 188 residues: Probable DNA-directed RNA polymerase subunit delta (188 aa).

The region spanning 14-83 (LSMIEVARAI…GENKWGLRSW (70 aa)) is the HTH HARE-type domain. The disordered stretch occupies residues 119–188 (EDAIDYSADD…EDEEDEEEEE (70 aa)).

Belongs to the RpoE family. In terms of assembly, RNAP is composed of a core of 2 alpha, a beta and a beta' subunits. The core is associated with a delta subunit and one of several sigma factors.

Its function is as follows. Participates in both the initiation and recycling phases of transcription. In the presence of the delta subunit, RNAP displays an increased specificity of transcription, a decreased affinity for nucleic acids, and an increased efficiency of RNA synthesis because of enhanced recycling. The polypeptide is Probable DNA-directed RNA polymerase subunit delta (Streptococcus equi subsp. equi (strain 4047)).